We begin with the raw amino-acid sequence, 79 residues long: Translation initiation factor IF-1, chloroplastic (79 aa).

Residues Met-1–Arg-74 form the S1-like domain.

The protein belongs to the IF-1 family. In terms of assembly, component of the 30S ribosomal translation pre-initiation complex which assembles on the 30S ribosome in the order IF-2 and IF-3, IF-1 and N-formylmethionyl-tRNA(fMet); mRNA recruitment can occur at any time during PIC assembly.

The protein localises to the plastid. Its subcellular location is the chloroplast. Its function is as follows. One of the essential components for the initiation of protein synthesis. Stabilizes the binding of IF-2 and IF-3 on the 30S subunit to which N-formylmethionyl-tRNA(fMet) subsequently binds. Helps modulate mRNA selection, yielding the 30S pre-initiation complex (PIC). Upon addition of the 50S ribosomal subunit IF-1, IF-2 and IF-3 are released leaving the mature 70S translation initiation complex. This Chlorella vulgaris (Green alga) protein is Translation initiation factor IF-1, chloroplastic.